Here is a 459-residue protein sequence, read N- to C-terminus: WD repeat-containing protein 41 (459 aa).

WD repeat units lie at residues 40–79 (KAHH…KLLE), 82–128 (GHTQ…QVQR), 131–168 (CFQS…LCKT), 220–258 (DHQD…MQAY), 321–359 (AHDS…QLAA), and 403–441 (GHSS…SGLR).

Component of the C9orf72-SMCR8 complex, at least composed of C9orf72, SMCR8 and WDR41. The complex is formed of two protomers, each individually consisting of one molecule each of C9orf72, SMCR8 and WDR41. The protomers homodimerize via an interaction between C9orf72 (via C-terminus) and SMCR8 (via N-terminus). Within each protomer SMCR8 (via DENN domain) acts as a bridging protein between WDR41 (via C-terminus and N-terminus) and C9orf72 (via C-terminus). The C9orf72-SMCR8 complex associates with the ULK1/ATG1 kinase complex.

The protein resides in the cytoplasm. Its function is as follows. Non-catalytic component of the C9orf72-SMCR8 complex, a complex that has guanine nucleotide exchange factor (GEF) activity and regulates autophagy. The C9orf72-SMCR8 complex promotes the exchange of GDP to GTP, converting inactive GDP-bound RAB8A and RAB39B into their active GTP-bound form, thereby promoting autophagosome maturation. As part of the C9orf72-SMCR8 complex, stimulates RAB8A and RAB11A GTPase activity in vitro, however WDR42 is shown not be an essential complex component for this function. The C9orf72-SMCR8 complex also acts as a negative regulator of autophagy initiation by interacting with the ULK1/ATG1 kinase complex and inhibiting its protein kinase activity. This is WD repeat-containing protein 41 from Homo sapiens (Human).